The following is a 290-amino-acid chain: Bifunctional protein FolD (290 aa).

NADP(+) contacts are provided by residues 164 to 166 (GRS), serine 193, and isoleucine 234.

The protein belongs to the tetrahydrofolate dehydrogenase/cyclohydrolase family. As to quaternary structure, homodimer.

It carries out the reaction (6R)-5,10-methylene-5,6,7,8-tetrahydrofolate + NADP(+) = (6R)-5,10-methenyltetrahydrofolate + NADPH. The catalysed reaction is (6R)-5,10-methenyltetrahydrofolate + H2O = (6R)-10-formyltetrahydrofolate + H(+). The protein operates within one-carbon metabolism; tetrahydrofolate interconversion. Its function is as follows. Catalyzes the oxidation of 5,10-methylenetetrahydrofolate to 5,10-methenyltetrahydrofolate and then the hydrolysis of 5,10-methenyltetrahydrofolate to 10-formyltetrahydrofolate. The chain is Bifunctional protein FolD from Cytophaga hutchinsonii (strain ATCC 33406 / DSM 1761 / CIP 103989 / NBRC 15051 / NCIMB 9469 / D465).